Reading from the N-terminus, the 361-residue chain is Chorismate synthase (361 aa).

NADP(+) contacts are provided by arginine 48 and arginine 54. FMN is bound by residues 125-127 (RSS), 238-239 (NA), glycine 278, 293-297 (KPTSS), and arginine 319.

It belongs to the chorismate synthase family. As to quaternary structure, homotetramer. The cofactor is FMNH2.

It catalyses the reaction 5-O-(1-carboxyvinyl)-3-phosphoshikimate = chorismate + phosphate. It participates in metabolic intermediate biosynthesis; chorismate biosynthesis; chorismate from D-erythrose 4-phosphate and phosphoenolpyruvate: step 7/7. Catalyzes the anti-1,4-elimination of the C-3 phosphate and the C-6 proR hydrogen from 5-enolpyruvylshikimate-3-phosphate (EPSP) to yield chorismate, which is the branch point compound that serves as the starting substrate for the three terminal pathways of aromatic amino acid biosynthesis. This reaction introduces a second double bond into the aromatic ring system. In Proteus mirabilis (strain HI4320), this protein is Chorismate synthase.